The sequence spans 560 residues: Putative transport protein ESA_02488 (560 aa).

5 helical membrane passes run 8–28 (LLNG…LCLG), 32–52 (LGSV…LLGQ), 66–86 (FMLF…SIFF), 91–111 (NYLM…LGLG), and 158–178 (HLSL…IFGA). 2 consecutive RCK C-terminal domains span residues 200-288 (RGLD…SFRN) and 292-373 (VFDR…RIGF). The next 5 helical transmembrane spans lie at 383-403 (LLAF…TFQF), 406-426 (FSFG…LGFL), 447-467 (FGLM…IGHG), 475-495 (MLFA…LFGA), and 539-559 (YAIA…IWPG).

It belongs to the AAE transporter (TC 2.A.81) family. YbjL subfamily.

Its subcellular location is the cell membrane. The chain is Putative transport protein ESA_02488 from Cronobacter sakazakii (strain ATCC BAA-894) (Enterobacter sakazakii).